The sequence spans 571 residues: uncharacterized protein (571 aa).

11 helical membrane passes run V5–V27, T34–T56, I61–A79, L92–F114, T161–F183, F391–S408, F412–I434, L455–T474, F484–L506, V513–L532, and S547–I569.

It belongs to the AAE transporter (TC 2.A.81) family.

It localises to the cell membrane. This is an uncharacterized protein from Francisella tularensis subsp. tularensis (strain SCHU S4 / Schu 4).